A 625-amino-acid chain; its full sequence is Glyco-Gag protein (625 aa).

Over 1–66 (LGDVSEASGA…SVFRRNRAAR (66 aa)) the chain is Cytoplasmic. Residues 67–86 (LVCLSIVLSFVCSLLFWTAS) form a helical membrane-spanning segment. The Extracellular segment spans residues 87 to 625 (KNMGQTVTTP…PQTSLLTLDD (539 aa)). Residue asparagine 113 is glycosylated (N-linked (GlcNAc...) asparagine; by host). A disordered region spans residues 195–305 (PSPTAPILPS…STTSRAFPLR (111 aa)). Asparagine 479 carries an N-linked (GlcNAc...) asparagine; by host glycan. 2 stretches are compositionally biased toward basic and acidic residues: residues 522 to 553 (ETPE…EKER) and 573 to 606 (RQDR…DCPK). Residues 522–625 (ETPEEREERV…PQTSLLTLDD (104 aa)) form a disordered region.

Post-translationally, glycosylated by host. Cleaved by host near the middle of the molecule, releasing the c-terminal half containing capsid and nucleoprotein domains op GAG.

The protein localises to the host cell membrane. Functionally, plays a role in viral particle release. Presumably acts by facilitating the fission of the virion bud at the cell surface. May prevent the antiviral activity of murine APOBEC3. The sequence is that of Glyco-Gag protein from AKV murine leukemia virus (AKR (endogenous) murine leukemia virus).